We begin with the raw amino-acid sequence, 490 residues long: Gallate decarboxylase (490 aa).

Aspartate 165 lines the Mn(2+) pocket. Prenylated FMN-binding positions include 168-170 (IHR) and glycine 187. Glutamate 233 provides a ligand contact to Mn(2+). Glutamate 289 acts as the Proton acceptor in catalysis.

Belongs to the UbiD family. Prenylated FMN serves as cofactor. Requires Mn(2+) as cofactor.

The enzyme catalyses 3,4,5-trihydroxybenzoate + H(+) = 1,2,3-trihydroxybenzene + CO2. It carries out the reaction 3,4-dihydroxybenzoate + H(+) = catechol + CO2. Functionally, involved in tannin degradation. Catalyzes the decarboxylation of gallic acid and protocatechuic acid to pyrogallol and catechol, respectively. The polypeptide is Gallate decarboxylase (Lactiplantibacillus plantarum (strain ATCC BAA-793 / NCIMB 8826 / WCFS1) (Lactobacillus plantarum)).